A 58-amino-acid polypeptide reads, in one-letter code: Small ribosomal subunit protein bS21 (58 aa).

Belongs to the bacterial ribosomal protein bS21 family.

The chain is Small ribosomal subunit protein bS21 from Streptococcus pyogenes serotype M49 (strain NZ131).